The primary structure comprises 460 residues: Methionine aminopeptidase 2-1 (460 aa).

Residues 1–90 (MGSKSPNGED…SAQAAQQTAP (90 aa)) are disordered. Over residues 30–39 (SAAASGLLRG) the composition is skewed to low complexity. A compositionally biased stretch (acidic residues) spans 42-52 (EDQDEDGDDDE). Over residues 69–81 (TKKRRRNNKKKKS) the composition is skewed to basic residues. Position 212 (H212) interacts with substrate. A divalent metal cation is bound by residues D233, D244, and H313. H321 is a substrate binding site. E346 and E441 together coordinate a divalent metal cation.

Belongs to the peptidase M24A family. Methionine aminopeptidase eukaryotic type 2 subfamily. The cofactor is Co(2+). It depends on Zn(2+) as a cofactor. Mn(2+) is required as a cofactor. Requires Fe(2+) as cofactor.

The protein localises to the cytoplasm. It catalyses the reaction Release of N-terminal amino acids, preferentially methionine, from peptides and arylamides.. Cotranslationally removes the N-terminal methionine from nascent proteins. The N-terminal methionine is often cleaved when the second residue in the primary sequence is small and uncharged (Met-Ala-, Cys, Gly, Pro, Ser, Thr, or Val). This is Methionine aminopeptidase 2-1 from Leptosphaeria maculans (strain JN3 / isolate v23.1.3 / race Av1-4-5-6-7-8) (Blackleg fungus).